Here is a 375-residue protein sequence, read N- to C-terminus: Putative F-box protein At1g12190 (375 aa).

The F-box domain maps to 1–46 (MACVKFPWELMEEILYRVPSLSLSRFKTVSKEWNTLLNDKTFIKKH).

This Arabidopsis thaliana (Mouse-ear cress) protein is Putative F-box protein At1g12190.